The chain runs to 117 residues: Large ribosomal subunit protein bL20c (117 aa).

Belongs to the bacterial ribosomal protein bL20 family.

It localises to the plastid. It is found in the chloroplast. In terms of biological role, binds directly to 23S ribosomal RNA and is necessary for the in vitro assembly process of the 50S ribosomal subunit. It is not involved in the protein synthesizing functions of that subunit. This is Large ribosomal subunit protein bL20c from Platanus occidentalis (Sycamore).